Reading from the N-terminus, the 274-residue chain is Phosphatidylglycerol--prolipoprotein diacylglyceryl transferase (274 aa).

A run of 4 helical transmembrane segments spans residues 16–36 (VGLH…LSSF), 62–82 (FALG…VLFY), 94–114 (IIKI…LVIW), and 129–149 (LSVT…ALLI). Residue Arg150 coordinates a 1,2-diacyl-sn-glycero-3-phospho-(1'-sn-glycerol). 3 helical membrane-spanning segments follow: residues 184 to 204 (VQLY…WLCY), 213 to 233 (GYSA…AEFF), and 247 to 267 (LTIG…ILWI).

This sequence belongs to the Lgt family.

Its subcellular location is the cell inner membrane. It carries out the reaction L-cysteinyl-[prolipoprotein] + a 1,2-diacyl-sn-glycero-3-phospho-(1'-sn-glycerol) = an S-1,2-diacyl-sn-glyceryl-L-cysteinyl-[prolipoprotein] + sn-glycerol 1-phosphate + H(+). Its pathway is protein modification; lipoprotein biosynthesis (diacylglyceryl transfer). In terms of biological role, catalyzes the transfer of the diacylglyceryl group from phosphatidylglycerol to the sulfhydryl group of the N-terminal cysteine of a prolipoprotein, the first step in the formation of mature lipoproteins. The chain is Phosphatidylglycerol--prolipoprotein diacylglyceryl transferase from Chlamydia muridarum (strain MoPn / Nigg).